The chain runs to 60 residues: Antimicrobial peptide Eval151 (60 aa).

The first 23 residues, 1 to 23, serve as a signal peptide directing secretion; that stretch reads MKVLPVLFLTLLVLISIPAETFC. Arg-36 is subject to Arginine amide. Residues 36–54 show a composition bias toward basic and acidic residues; the sequence is RGKRNDFFRSDVSRDDESH. Positions 36–60 are disordered; sequence RGKRNDFFRSDVSRDDESHPSPGQK. The propeptide occupies 37 to 60; it reads GKRNDFFRSDVSRDDESHPSPGQK.

This sequence belongs to the non-disulfide-bridged peptide (NDBP) superfamily. In terms of tissue distribution, expressed by the venom gland.

It is found in the secreted. In terms of biological role, probable antimicrobial peptide. Has no inhibitory activity against herpes simplex virus type 1 (HSV-1). In Euscorpiops validus (Scorpion), this protein is Antimicrobial peptide Eval151.